A 93-amino-acid chain; its full sequence is UPF0358 protein ABC2396 (93 aa).

Belongs to the UPF0358 family.

This chain is UPF0358 protein ABC2396, found in Shouchella clausii (strain KSM-K16) (Alkalihalobacillus clausii).